Reading from the N-terminus, the 535-residue chain is Importin subunit alpha-2 (535 aa).

The IBB domain occupies 1–58 (MSLRPNAKTEVRRNRYKVAVDAEEGRRRREDNMVEIRKSKREESLQKKRREGLQANQL). The span at 20–46 (VDAEEGRRRREDNMVEIRKSKREESLQ) shows a compositional bias: basic and acidic residues. The tract at residues 20–67 (VDAEEGRRRREDNMVEIRKSKREESLQKKRREGLQANQLPQFAPSPVP) is disordered. ARM repeat units lie at residues 67–106 (PASSTVEKKLESLPAMVGGVWSDDRSLQLEATTQFRKLLS), 110–150 (SPPI…NIAS), 153–192 (SENTKVVIEHGAVPIFVQLLASQSDDVREQAVWALGNVAG), 195–235 (PRCR…NFCR), 237–276 (KPQPPFDQVRPALPALERLIHSTDEEVLTDACWALSYLSD), 279–318 (NDKIQSVIEAGVVPRLVELLQHQSPSVLIPALRSIGNIVT), 321–361 (DLQT…NITA), 364–403 (RDQIQAVCEAGLICPLVNLLQNAEFDIKKEAAWAISNATS), 407–446 (PDQIKYMVEQGVVKPLCDLLVCPDPRIITVCLEGLENILK), and 461–500 (NFYAQLIDDAEGLEKIENLQSHDNSEIYEKAVKILETYWL).

Belongs to the importin alpha family. In terms of assembly, forms a complex with the importin subunit beta-1 KPNB1. Interacts with A.tumefaciens VirD2 and VirE2. Binds to SWO1.

Its subcellular location is the nucleus envelope. In terms of biological role, binds to conventional NLS motifs and mediates nuclear protein import across the nuclear envelope. Involved in the maintenance of cell wall integrity under salt stress via interaction with SWO1. Acts as a cellular receptor for the nuclear import of the virD2 protein of Agrobacterium, but is not essential for Agrobacterium-mediated root transformation. The protein is Importin subunit alpha-2 of Arabidopsis thaliana (Mouse-ear cress).